A 161-amino-acid polypeptide reads, in one-letter code: MDDIYKAAVEQLTEEQKNEFKAAFDIFVLGAEDGCISTKELGKVMRMLGQNPTPEELQEMIDEVDEDGSGTVDFDEFLVMMVRCMKDDSKGKTEEELSDLFRMFDKNADGYIDLEELKIMLQATGETITEDDIEELMKDGDKNNDGRIDYDEFLEFMKGVE.

At Met1 the chain carries N-acetylmethionine. EF-hand domains lie at 16 to 51 (QKNE…LGQN), 52 to 87 (PTPE…CMKD), 92 to 127 (KTEE…TGET), and 128 to 161 (ITED…KGVE). Residues Asp65, Asp67, Ser69, Thr71, Glu76, Asp105, Asn107, Asp109, Tyr111, Glu116, Asp141, Asn143, Asp145, Arg147, and Glu152 each contribute to the Ca(2+) site.

This sequence belongs to the troponin C family.

Troponin is the central regulatory protein of striated muscle contraction. Tn consists of three components: Tn-I which is the inhibitor of actomyosin ATPase, Tn-T which contains the binding site for tropomyosin and Tn-C. The binding of calcium to Tn-C abolishes the inhibitory action of Tn on actin filaments. The protein is Troponin C, slow skeletal and cardiac muscles (TNNC1) of Gallus gallus (Chicken).